The primary structure comprises 619 residues: N-acetylmuramoyl-L-alanine amidase domain-containing protein SAOUHSC_02979 (619 aa).

The N-terminal stretch at 1–27 (MPKNKILIYLLSTTLVLPTLVSPTAYA) is a signal peptide. Disordered stretches follow at residues 25–83 (AYAD…TIDD), 134–226 (SDYE…SMSD), and 238–290 (EDAK…NQKD). Composition is skewed to basic and acidic residues over residues 30-65 (PQKD…KADK), 73-82 (NNDKKFKTID), and 137-146 (EQPRNGEKST). Low complexity predominate over residues 147–156 (NDSNKNSDNS). The segment covering 157-175 (IKNDTDTQSSKQDKADNQK) has biased composition (basic and acidic residues). A compositionally biased stretch (polar residues) spans 176 to 192 (APKSNNTKPSTSNKQPN). Low complexity predominate over residues 214 to 226 (QKSSSKDNQSMSD). Basic and acidic residues predominate over residues 238–260 (EDAKKTQKDYASQSKKDKNEKSN). The N-acetylmuramoyl-L-alanine amidase stretch occupies residues 327 to 468 (IAKDAHRIGQ…LNSIIKHYQL (142 aa)). The 130-residue stretch at 488 to 617 (DYDDSSDEFK…AAAEELSYIT (130 aa)) folds into the Peptidase C51 domain.

The protein in the N-terminal section; belongs to the N-acetylmuramoyl-L-alanine amidase 2 family.

It localises to the secreted. The protein is N-acetylmuramoyl-L-alanine amidase domain-containing protein SAOUHSC_02979 of Staphylococcus aureus (strain NCTC 8325 / PS 47).